We begin with the raw amino-acid sequence, 195 residues long: Interferon tau-11 (195 aa).

The signal sequence occupies residues Met-1–Gly-23. 2 disulfide bridges follow: Cys-24–Cys-122 and Cys-52–Cys-162. An N-linked (GlcNAc...) asparagine glycan is attached at Asn-101.

Belongs to the alpha/beta interferon family. IFN-alphaII subfamily. In terms of tissue distribution, constitutively and exclusively expressed in the mononuclear cells of the extraembryonic trophectoderm.

Its subcellular location is the secreted. Functionally, paracrine hormone primarily responsible for maternal recognition of pregnancy. Interacts with endometrial receptors, probably type I interferon receptors, and blocks estrogen receptor expression, preventing the estrogen-induced increase in oxytocin receptor expression in the endometrium. This results in the suppression of the pulsatile endometrial release of the luteolytic hormone prostaglandin F2-alpha, hindering the regression of the corpus luteum (luteolysis) and therefore a return to ovarian cyclicity. This, and a possible direct effect of IFN-tau on prostaglandin synthesis, leads in turn to continued ovarian progesterone secretion, which stimulates the secretion by the endometrium of the nutrients required for the growth of the conceptus. In summary, displays particularly high antiviral and antiproliferative potency concurrently with particular weak cytotoxicity, high antiluteolytic activity and immunomodulatory properties. In contrast with other IFNs, IFN-tau is not virally inducible. This is Interferon tau-11 (IFNT11) from Ovis aries (Sheep).